Reading from the N-terminus, the 172-residue chain is Antibacterial protein PR-39 (172 aa).

Residues 1–29 (METQRASLCLGRWSLWLLLLGLVVPSASA) form the signal peptide. A Pyrrolidone carboxylic acid modification is found at glutamine 30. A propeptide spanning residues 30 to 130 (QALSYREAVL…DISCNEIQSV (101 aa)) is cleaved from the precursor. A disordered region spans residues 61 to 80 (DQPPKADEDPGTPKPVSFTV). Disulfide bonds link cysteine 85/cysteine 96 and cysteine 107/cysteine 124. Residues 130–172 (VRRRPRPPYLPRPRPPPFFPPRLPPRIPPGFPPRFPPRFPGKR) are disordered. Residues 136-172 (PPYLPRPRPPPFFPPRLPPRIPPGFPPRFPPRFPGKR) show a composition bias toward pro residues. Proline 169 is subject to Proline amide.

This sequence belongs to the cathelicidin family. In terms of tissue distribution, small intestine and bone marrow.

It localises to the secreted. Exerts a potent antimicrobial activity against both E.coli and B.megaterium. This Sus scrofa (Pig) protein is Antibacterial protein PR-39 (PR39).